The primary structure comprises 469 residues: Ribulose bisphosphate carboxylase large chain (469 aa).

The propeptide occupies 1-2 (MS). N-acetylproline is present on proline 3. Lysine 14 is subject to N6,N6,N6-trimethyllysine. Substrate contacts are provided by asparagine 123 and threonine 173. Lysine 175 (proton acceptor) is an active-site residue. Lysine 177 lines the substrate pocket. Residues lysine 201, aspartate 203, and glutamate 204 each contribute to the Mg(2+) site. Position 201 is an N6-carboxylysine (lysine 201). The Proton acceptor role is filled by histidine 294. Residues arginine 295, histidine 327, and serine 379 each contribute to the substrate site.

Belongs to the RuBisCO large chain family. Type I subfamily. In terms of assembly, heterohexadecamer of 8 large chains and 8 small chains; disulfide-linked. The disulfide link is formed within the large subunit homodimers. Mg(2+) is required as a cofactor. In terms of processing, the disulfide bond which can form in the large chain dimeric partners within the hexadecamer appears to be associated with oxidative stress and protein turnover.

It localises to the plastid. The protein resides in the chloroplast. The enzyme catalyses 2 (2R)-3-phosphoglycerate + 2 H(+) = D-ribulose 1,5-bisphosphate + CO2 + H2O. It catalyses the reaction D-ribulose 1,5-bisphosphate + O2 = 2-phosphoglycolate + (2R)-3-phosphoglycerate + 2 H(+). Functionally, ruBisCO catalyzes two reactions: the carboxylation of D-ribulose 1,5-bisphosphate, the primary event in carbon dioxide fixation, as well as the oxidative fragmentation of the pentose substrate in the photorespiration process. Both reactions occur simultaneously and in competition at the same active site. This is Ribulose bisphosphate carboxylase large chain from Iris ensata (Japanese iris).